The chain runs to 806 residues: Ribonucleoside-diphosphate reductase large subunit-like protein (806 aa).

The protein belongs to the ribonucleoside diphosphate reductase large chain family.

The protein localises to the virion. It is found in the host cytoplasm. Its function is as follows. Does not possess a ribonucleotide reductase activity. Betaherpesviruses probably use another strategy to expand the dNTP pool in a quiescent host cell. The protein is Ribonucleoside-diphosphate reductase large subunit-like protein of Human herpesvirus 7 (strain JI) (HHV-7).